Consider the following 465-residue polypeptide: Botryococcus squalene synthase (465 aa).

2 residues coordinate NADP(+): Arg48 and Arg73. The Mg(2+) site is built by Asp76, Glu79, and Asp80. The NADP(+) site is built by Arg215, Lys315, and Arg317. 2 helical membrane passes run 395-415 and 429-449; these read AIRL…FNLG and ILDL…LLVL.

The protein belongs to the phytoene/squalene synthase family.

The protein localises to the membrane. It carries out the reaction presqualene diphosphate + NADPH + H(+) = squalene + diphosphate + NADP(+). Its function is as follows. Produces squalene when coexpressed with SSL-1 and bisfarnesyl ether and a very small amount of squalene when incubated alone in the presence of NADPH. The protein is Botryococcus squalene synthase (SSL-2) of Botryococcus braunii (Green alga).